Reading from the N-terminus, the 513-residue chain is Maturase K (513 aa).

This sequence belongs to the intron maturase 2 family. MatK subfamily.

It localises to the plastid. The protein resides in the chloroplast. Functionally, usually encoded in the trnK tRNA gene intron. Probably assists in splicing its own and other chloroplast group II introns. This is Maturase K from Pinus parviflora (Japanese white pine).